The chain runs to 117 residues: Large ribosomal subunit protein bL31B (117 aa).

The interval Lys-75–Lys-117 is disordered. Positions Ser-100–Arg-109 are enriched in basic and acidic residues.

The protein belongs to the bacterial ribosomal protein bL31 family. Type B subfamily. As to quaternary structure, part of the 50S ribosomal subunit.

In Protochlamydia amoebophila (strain UWE25), this protein is Large ribosomal subunit protein bL31B.